We begin with the raw amino-acid sequence, 114 residues long: Iron-sulfur cluster insertion protein ErpA (114 aa).

Residues Cys-42, Cys-106, and Cys-108 each contribute to the iron-sulfur cluster site.

It belongs to the HesB/IscA family. In terms of assembly, homodimer. Requires iron-sulfur cluster as cofactor.

Functionally, required for insertion of 4Fe-4S clusters for at least IspG. The protein is Iron-sulfur cluster insertion protein ErpA of Serratia proteamaculans (strain 568).